The chain runs to 271 residues: Glutamate racemase (271 aa).

Residues 10 to 11 and 42 to 43 each bind substrate; these read DS and YG. The active-site Proton donor/acceptor is the C73. Residue 74-75 participates in substrate binding; that stretch reads NT. Residue C183 is the Proton donor/acceptor of the active site. 184-185 lines the substrate pocket; it reads TH.

Belongs to the aspartate/glutamate racemases family.

It carries out the reaction L-glutamate = D-glutamate. It participates in cell wall biogenesis; peptidoglycan biosynthesis. In terms of biological role, provides the (R)-glutamate required for cell wall biosynthesis. The chain is Glutamate racemase from Streptococcus thermophilus (strain ATCC BAA-250 / LMG 18311).